The sequence spans 520 residues: GMP synthase [glutamine-hydrolyzing] (520 aa).

Residues 9–202 form the Glutamine amidotransferase type-1 domain; the sequence is KILILDFGSQ…VRKICGCSGK (194 aa). Catalysis depends on cysteine 86, which acts as the Nucleophile. Residues histidine 176 and glutamate 178 contribute to the active site. The GMPS ATP-PPase domain occupies 203–395; sequence WTPGQIIEDA…LGLPHQMVWR (193 aa). ATP is bound at residue 230–236; the sequence is SGGVDSS.

As to quaternary structure, homodimer.

It catalyses the reaction XMP + L-glutamine + ATP + H2O = GMP + L-glutamate + AMP + diphosphate + 2 H(+). The protein operates within purine metabolism; GMP biosynthesis; GMP from XMP (L-Gln route): step 1/1. Functionally, catalyzes the synthesis of GMP from XMP. The chain is GMP synthase [glutamine-hydrolyzing] from Geotalea daltonii (strain DSM 22248 / JCM 15807 / FRC-32) (Geobacter daltonii).